Consider the following 249-residue polypeptide: tRNA (guanine-N(7)-)-methyltransferase (249 aa).

The tract at residues 1–24 is disordered; sequence MHSIPADTGHTPSRAPAGNGSPPA. S-adenosyl-L-methionine contacts are provided by glutamate 81, glutamate 106, aspartate 133, and aspartate 156. Residue aspartate 156 is part of the active site. Lysine 160 is a binding site for substrate. The interaction with RNA stretch occupies residues 162–167; the sequence is RHNKRR. Residues aspartate 192 and 227 to 230 each bind substrate; that span reads TKFE.

The protein belongs to the class I-like SAM-binding methyltransferase superfamily. TrmB family.

The enzyme catalyses guanosine(46) in tRNA + S-adenosyl-L-methionine = N(7)-methylguanosine(46) in tRNA + S-adenosyl-L-homocysteine. It functions in the pathway tRNA modification; N(7)-methylguanine-tRNA biosynthesis. Catalyzes the formation of N(7)-methylguanine at position 46 (m7G46) in tRNA. In Paracidovorax citrulli (strain AAC00-1) (Acidovorax citrulli), this protein is tRNA (guanine-N(7)-)-methyltransferase.